We begin with the raw amino-acid sequence, 164 residues long: Cytochrome c-type biogenesis protein CcmE (164 aa).

At 1 to 8 (MNPRRKKR) the chain is on the cytoplasmic side. A helical; Signal-anchor for type II membrane protein membrane pass occupies residues 9–29 (LTLAVALIGGVAAIASLLLYA). Residues 30 to 164 (LNSNLNLFFT…EDQSKAGGYK (135 aa)) lie on the Periplasmic side of the membrane. The heme site is built by His-131 and Tyr-135. The interval 140-164 (VAEAMGQSHEKLDYSEDQSKAGGYK) is disordered. Residues 147–158 (SHEKLDYSEDQS) show a composition bias toward basic and acidic residues.

The protein belongs to the CcmE/CycJ family.

The protein localises to the cell inner membrane. Heme chaperone required for the biogenesis of c-type cytochromes. Transiently binds heme delivered by CcmC and transfers the heme to apo-cytochromes in a process facilitated by CcmF and CcmH. This chain is Cytochrome c-type biogenesis protein CcmE, found in Shewanella piezotolerans (strain WP3 / JCM 13877).